Consider the following 452-residue polypeptide: GTPase Der (452 aa).

EngA-type G domains are found at residues 4–169 and 177–352; these read PIVA…PSPD and INVS…EEHR. GTP contacts are provided by residues 10–17, 57–61, 120–123, 183–190, 230–234, and 295–298; these read GRPNVGKS, DTGGL, NKCE, DTAGI, and NKWD. Residues 353-438 form the KH-like domain; sequence RRVNTSVVNE…PIRLLWRGKK (86 aa).

This sequence belongs to the TRAFAC class TrmE-Era-EngA-EngB-Septin-like GTPase superfamily. EngA (Der) GTPase family. As to quaternary structure, associates with the 50S ribosomal subunit.

GTPase that plays an essential role in the late steps of ribosome biogenesis. The sequence is that of GTPase Der from Crocosphaera subtropica (strain ATCC 51142 / BH68) (Cyanothece sp. (strain ATCC 51142)).